We begin with the raw amino-acid sequence, 362 residues long: Putative G-protein coupled receptor B0244.5 (362 aa).

Over 1 to 47 the chain is Extracellular; that stretch reads MQNIFENCSYHSKYEPYFLNCTNTTNQCVLIQDVGIIQAIDFWANLC. N-linked (GlcNAc...) asparagine glycans are attached at residues asparagine 7, asparagine 20, and asparagine 23. Residues 48-68 form a helical membrane-spanning segment; it reads IPFTLFVIAFILNGYYLSILI. The Cytoplasmic portion of the chain corresponds to 69 to 81; the sequence is PEFRKMNDTTKKQ. A helical transmembrane segment spans residues 82-102; the sequence is YIFVVSRGISSLSASSIMMVL. Over 103 to 125 the chain is Extracellular; it reads RLLKMLSTSFTVYFLFFLIDDLS. Residues 126 to 145 traverse the membrane as a helical segment; sequence FYSLLGSYVGSTLLLYLATV. The Cytoplasmic segment spans residues 146–161; the sequence is RPIFYSIQISVRIVYK. A helical membrane pass occupies residues 162–182; the sequence is FALVNVLLAVVLAVTTAIFQA. The Extracellular segment spans residues 183 to 204; the sequence is AEVSDGFFHCDVQHCQPIINIA. Residues 205 to 225 form a helical membrane-spanning segment; sequence MFVIIATSFLIPIITLTFVLV. The Cytoplasmic segment spans residues 226–255; the sequence is TLCFQKSRTQSIGNFTVDNSVYKSARTRLA. The chain crosses the membrane as a helical span at residues 256-276; sequence WTLFTFTLISLTEMIPSSFLV. Residues 277-295 lie on the Extracellular side of the membrane; that stretch reads NLRVEDTITICVNFYQADH. The helical transmembrane segment at 296-316 threads the bilayer; that stretch reads LFIPAIMNSFQTLAWGIALIV. Topologically, residues 317 to 362 are cytoplasmic; that stretch reads DPLCALLFDPRIRKVWVEHVSRLSIIIGRSFEACCHSNLNKEIQDK.

The protein belongs to the G-protein coupled receptor 1 family. B0244 subfamily.

The protein localises to the cell membrane. This Caenorhabditis elegans protein is Putative G-protein coupled receptor B0244.5.